A 227-amino-acid chain; its full sequence is Cytochrome c oxidase subunit 2 (227 aa).

At 1–14 (MAYPFELGFQDATS) the chain is on the mitochondrial intermembrane side. The helical transmembrane segment at 15–45 (PIMEELLHFHDHTLMIVFLISSLVLYIISLM) threads the bilayer. The Mitochondrial matrix segment spans residues 46–59 (LTTKLTHTSTMDAQ). The helical transmembrane segment at 60–87 (EVETIWTILPAIILILIALPSLRILYMM) threads the bilayer. Residues 88 to 227 (DEINDPSLTV…HFENWSSSML (140 aa)) are Mitochondrial intermembrane-facing. His-161, Cys-196, Glu-198, Cys-200, His-204, and Met-207 together coordinate Cu cation. Residue Glu-198 participates in Mg(2+) binding.

Belongs to the cytochrome c oxidase subunit 2 family. As to quaternary structure, component of the cytochrome c oxidase (complex IV, CIV), a multisubunit enzyme composed of 14 subunits. The complex is composed of a catalytic core of 3 subunits MT-CO1, MT-CO2 and MT-CO3, encoded in the mitochondrial DNA, and 11 supernumerary subunits COX4I, COX5A, COX5B, COX6A, COX6B, COX6C, COX7A, COX7B, COX7C, COX8 and NDUFA4, which are encoded in the nuclear genome. The complex exists as a monomer or a dimer and forms supercomplexes (SCs) in the inner mitochondrial membrane with NADH-ubiquinone oxidoreductase (complex I, CI) and ubiquinol-cytochrome c oxidoreductase (cytochrome b-c1 complex, complex III, CIII), resulting in different assemblies (supercomplex SCI(1)III(2)IV(1) and megacomplex MCI(2)III(2)IV(2)). Found in a complex with TMEM177, COA6, COX18, COX20, SCO1 and SCO2. Interacts with TMEM177 in a COX20-dependent manner. Interacts with COX20. Interacts with COX16. The cofactor is Cu cation.

Its subcellular location is the mitochondrion inner membrane. The enzyme catalyses 4 Fe(II)-[cytochrome c] + O2 + 8 H(+)(in) = 4 Fe(III)-[cytochrome c] + 2 H2O + 4 H(+)(out). Functionally, component of the cytochrome c oxidase, the last enzyme in the mitochondrial electron transport chain which drives oxidative phosphorylation. The respiratory chain contains 3 multisubunit complexes succinate dehydrogenase (complex II, CII), ubiquinol-cytochrome c oxidoreductase (cytochrome b-c1 complex, complex III, CIII) and cytochrome c oxidase (complex IV, CIV), that cooperate to transfer electrons derived from NADH and succinate to molecular oxygen, creating an electrochemical gradient over the inner membrane that drives transmembrane transport and the ATP synthase. Cytochrome c oxidase is the component of the respiratory chain that catalyzes the reduction of oxygen to water. Electrons originating from reduced cytochrome c in the intermembrane space (IMS) are transferred via the dinuclear copper A center (CU(A)) of subunit 2 and heme A of subunit 1 to the active site in subunit 1, a binuclear center (BNC) formed by heme A3 and copper B (CU(B)). The BNC reduces molecular oxygen to 2 water molecules using 4 electrons from cytochrome c in the IMS and 4 protons from the mitochondrial matrix. This Neotamias bulleri (Buller's chipmunk) protein is Cytochrome c oxidase subunit 2 (MT-CO2).